Consider the following 497-residue polypeptide: L-arabinose isomerase (497 aa).

Mn(2+)-binding residues include Glu-306, Glu-333, His-349, and His-448.

The protein belongs to the arabinose isomerase family. The cofactor is Mn(2+).

The catalysed reaction is beta-L-arabinopyranose = L-ribulose. Its pathway is carbohydrate degradation; L-arabinose degradation via L-ribulose; D-xylulose 5-phosphate from L-arabinose (bacterial route): step 1/3. Functionally, catalyzes the conversion of L-arabinose to L-ribulose. This chain is L-arabinose isomerase, found in Vibrio parahaemolyticus serotype O3:K6 (strain RIMD 2210633).